The sequence spans 266 residues: Putative carbamate hydrolase RutD (266 aa).

This sequence belongs to the AB hydrolase superfamily. Hydrolase RutD family.

It carries out the reaction carbamate + 2 H(+) = NH4(+) + CO2. In terms of biological role, involved in pyrimidine catabolism. May facilitate the hydrolysis of carbamate, a reaction that can also occur spontaneously. The chain is Putative carbamate hydrolase RutD from Enterobacter cloacae subsp. cloacae (strain ATCC 13047 / DSM 30054 / NBRC 13535 / NCTC 10005 / WDCM 00083 / NCDC 279-56).